A 426-amino-acid polypeptide reads, in one-letter code: Enolase (426 aa).

Gln163 contributes to the (2R)-2-phosphoglycerate binding site. The active-site Proton donor is Glu205. The Mg(2+) site is built by Asp242, Glu285, and Asp312. Residues Lys337, Arg366, Ser367, and Lys388 each contribute to the (2R)-2-phosphoglycerate site. Lys337 acts as the Proton acceptor in catalysis.

It belongs to the enolase family. The cofactor is Mg(2+).

It is found in the cytoplasm. It localises to the secreted. The protein resides in the cell surface. The enzyme catalyses (2R)-2-phosphoglycerate = phosphoenolpyruvate + H2O. Its pathway is carbohydrate degradation; glycolysis; pyruvate from D-glyceraldehyde 3-phosphate: step 4/5. Its function is as follows. Catalyzes the reversible conversion of 2-phosphoglycerate (2-PG) into phosphoenolpyruvate (PEP). It is essential for the degradation of carbohydrates via glycolysis. The polypeptide is Enolase (Caulobacter vibrioides (strain ATCC 19089 / CIP 103742 / CB 15) (Caulobacter crescentus)).